The chain runs to 269 residues: 5'-nucleotidase SurE (269 aa).

The a divalent metal cation site is built by Asp11, Asp12, Ser43, and Asn101.

This sequence belongs to the SurE nucleotidase family. A divalent metal cation is required as a cofactor.

It is found in the cytoplasm. The enzyme catalyses a ribonucleoside 5'-phosphate + H2O = a ribonucleoside + phosphate. Nucleotidase that shows phosphatase activity on nucleoside 5'-monophosphates. The chain is 5'-nucleotidase SurE from Synechococcus sp. (strain CC9605).